The following is a 342-amino-acid chain: Foldase protein PrsA (342 aa).

The signal sequence occupies residues 1–22; sequence MVSVKKIVASALVGVLMFSAVG. Cys-23 is lipidated: N-palmitoyl cysteine. Residue Cys-23 is the site of S-diacylglycerol cysteine attachment. The region spanning 190–284 is the PpiC domain; it reads AKGVLARHLL…FGYHIIQAGA (95 aa).

This sequence belongs to the PrsA family.

It localises to the cell membrane. The enzyme catalyses [protein]-peptidylproline (omega=180) = [protein]-peptidylproline (omega=0). Its function is as follows. Plays a major role in protein secretion by helping the post-translocational extracellular folding of several secreted proteins. The sequence is that of Foldase protein PrsA from Clostridium perfringens (strain SM101 / Type A).